We begin with the raw amino-acid sequence, 199 residues long: RNA pyrophosphohydrolase (199 aa).

Residues 6 to 154 (GYRPNVGIVL…KREVYELALS (149 aa)) form the Nudix hydrolase domain. A Nudix box motif is present at residues 38–59 (GGIQHGESPEQAMYRELHEEVG).

Belongs to the Nudix hydrolase family. RppH subfamily. Requires a divalent metal cation as cofactor.

Accelerates the degradation of transcripts by removing pyrophosphate from the 5'-end of triphosphorylated RNA, leading to a more labile monophosphorylated state that can stimulate subsequent ribonuclease cleavage. This is RNA pyrophosphohydrolase from Polynucleobacter asymbioticus (strain DSM 18221 / CIP 109841 / QLW-P1DMWA-1) (Polynucleobacter necessarius subsp. asymbioticus).